A 444-amino-acid chain; its full sequence is NADH-quinone oxidoreductase subunit F (444 aa).

Position 61–70 (61–70) interacts with NAD(+); that stretch reads GRGGAGFSTG. 176 to 223 contributes to the FMN binding site; the sequence is GAGRYICGEETALINSLEGRRANPRSKPPFPAVFGLWGKPTCVNNVET. The [4Fe-4S] cluster site is built by Cys-353, Cys-356, Cys-359, and Cys-400.

Belongs to the complex I 51 kDa subunit family. As to quaternary structure, composed of 13 different subunits. Subunits NuoCD, E, F, and G constitute the peripheral sector of the complex. FMN serves as cofactor. Requires [4Fe-4S] cluster as cofactor.

It carries out the reaction a quinone + NADH + 5 H(+)(in) = a quinol + NAD(+) + 4 H(+)(out). Its function is as follows. NDH-1 shuttles electrons from NADH, via FMN and iron-sulfur (Fe-S) centers, to quinones in the respiratory chain. Couples the redox reaction to proton translocation (for every two electrons transferred, four hydrogen ions are translocated across the cytoplasmic membrane), and thus conserves the redox energy in a proton gradient. The chain is NADH-quinone oxidoreductase subunit F (nuoF) from Buchnera aphidicola subsp. Acyrthosiphon pisum (strain APS) (Acyrthosiphon pisum symbiotic bacterium).